A 208-amino-acid chain; its full sequence is Ribosomal RNA large subunit methyltransferase E (208 aa).

Residues Gly-62, Trp-64, Asp-82, Asp-98, and Asp-123 each coordinate S-adenosyl-L-methionine. Lys-163 acts as the Proton acceptor in catalysis.

This sequence belongs to the class I-like SAM-binding methyltransferase superfamily. RNA methyltransferase RlmE family.

Its subcellular location is the cytoplasm. It catalyses the reaction uridine(2552) in 23S rRNA + S-adenosyl-L-methionine = 2'-O-methyluridine(2552) in 23S rRNA + S-adenosyl-L-homocysteine + H(+). Functionally, specifically methylates the uridine in position 2552 of 23S rRNA at the 2'-O position of the ribose in the fully assembled 50S ribosomal subunit. The protein is Ribosomal RNA large subunit methyltransferase E of Haemophilus ducreyi (strain 35000HP / ATCC 700724).